A 439-amino-acid chain; its full sequence is Oxysterol-binding protein 6 (439 aa).

Disordered stretches follow at residues 1 to 40 (MSAK…SGAD) and 409 to 439 (ESST…QTTN). Composition is skewed to polar residues over residues 409–419 (ESSTPNLSKVD) and 429–439 (PVDNSIPQTTN).

The protein belongs to the OSBP family.

The sequence is that of Oxysterol-binding protein 6 (osbF) from Dictyostelium discoideum (Social amoeba).